A 616-amino-acid chain; its full sequence is Methylmalonyl-CoA mutase small subunit (616 aa).

The protein belongs to the methylmalonyl-CoA mutase family. Heterodimer of an alpha and a beta chain. Adenosylcob(III)alamin is required as a cofactor.

The catalysed reaction is (R)-methylmalonyl-CoA = succinyl-CoA. The protein operates within metabolic intermediate metabolism; propanoyl-CoA degradation; succinyl-CoA from propanoyl-CoA: step 3/3. Its function is as follows. Catalyzes the isomerization of succinyl-CoA to methylmalonyl-CoA during synthesis of propionate from tricarboxylic acid-cycle intermediates. This conversion most likely represents an important source of building blocks for polyketide antibiotic biosynthesis. It is unable to catalyze the conversion of isobutyryl-CoA into N-butyryl-CoA. The protein is Methylmalonyl-CoA mutase small subunit (mutA) of Streptomyces virginiae (Streptomyces cinnamonensis).